The primary structure comprises 1077 residues: RNA polymerase-associated protein CTR9 (1077 aa).

TPR repeat units lie at residues Lys-56–Ser-89, Ile-138–Arg-174, Cys-183–Leu-216, Pro-218–Asn-251, Pro-298–Ile-332, Ser-338–Asn-371, Leu-373–Leu-405, Phe-421–Thr-455, Ser-462–Ile-495, Leu-501–Lys-534, Ile-540–Tyr-572, Gly-664–Asn-697, Phe-699–Glu-731, Asp-732–Glu-764, Pro-768–Ala-801, and Ala-830–Leu-863. Over residues Glu-959 to Asp-980 the composition is skewed to basic and acidic residues. A disordered region spans residues Glu-959–Phe-1077. A phosphoserine mark is found at Ser-1015 and Ser-1017. Acidic residues-rich tracts occupy residues Phe-1042–Ala-1051 and Asp-1063–Phe-1077.

In terms of assembly, component of the PAF1 complex which consists of at least CDC73, CTR9, LEO1, PAF1 and RTF1. Interacts with SPT6. Interacts with FACT subunits POB3 and SPT16.

The protein resides in the nucleus. It localises to the nucleoplasm. Its function is as follows. The PAF1 complex is a multifunctional complex. Involved in transcription initiation via genetic interactions with TATA-binding proteins. Involved in elongation. It regulates 3'-end formation of snR47 by modulating the recruitment or stable association of NRD1 and NAB3 with RNA polymerase II. Also has a role in transcription-coupled histone modification. Required for activation of RAD6 ubiquitin conjugate and the BRE1 ubiquitin ligase which ubiquitinate 'Lys-126' histone H2B. Activates the SET1 histone methyltransferase complex for methylation of 'Lys-4' of histone H3 and for methylation of 'Lys-73' of histone H3 by DOT1 and 'Lys-36' of histone H3 by SET2. In complex with PAF1, required for normal CLN1 and CLN2 G1 cyclin expression in late G1. Also has a role in chromosome segregation where it appears to be involved in microtubule placement. This Saccharomyces cerevisiae (strain ATCC 204508 / S288c) (Baker's yeast) protein is RNA polymerase-associated protein CTR9 (CTR9).